The primary structure comprises 266 residues: Aquaporin TIP3-2 (266 aa).

A run of 2 helical transmembrane segments spans residues 29–49 and 66–86; these read AAIS…GSVL and GLVA…AVAV. The short motif at 94–96 is the NPA 1 element; the sequence is NPA. 3 helical membrane-spanning segments follow: residues 109-129, 153-173, and 180-200; these read LVRA…ATLL, AVLL…ATVV, and LGTI…LAGG. The NPA 2 motif lies at 208–210; it reads NPA. A helical transmembrane segment spans residues 228-248; it reads YWLGPFLGAGLAGLVYEYLLI.

It belongs to the MIP/aquaporin (TC 1.A.8) family. TIP (TC 1.A.8.10) subfamily.

The protein localises to the vacuole membrane. Functionally, aquaporins facilitate the transport of water and small neutral solutes across cell membranes. This is Aquaporin TIP3-2 (TIP3-2) from Zea mays (Maize).